A 411-amino-acid polypeptide reads, in one-letter code: MAEKTEKPTAKKLRDAAKKGQTFKARDIVALIVIATGALAAPALVDLTRIAAEFVRIASTGAQPNPGAYAFAWAKLFLRIAAPFVLLCAAAGALPSLVQSRFTLAVESIRFDLTALDPVKGMKRLFSWRSAKDAVKALLYVGVFALTVRVFAGLYHADVFGLFRARPALLGHMWIVLTVRLVLLFLLCALPVLILDAAVEYFLYHRELKMDKHEVKQEYKESEGNHEIKSKRREIHQELLSEEIKANVEQSDFIVANPTHIAIGVYVNPDIVPIPFVSVRETNARALAVIRHAEACGVPVVRNVALARSIYRNSPRRYSFVSHDDIDGVMRVLIWLGEVEAANRGGPPPETRALTSAEPQARDGVAPPGDACADNAFPDDAPPGAAAPNAGSPDGPAPDGGAPARTGDQNA.

Helical transmembrane passes span 28 to 48 (IVAL…VDLT), 80 to 100 (IAAP…LVQS), 137 to 157 (ALLY…LYHA), and 175 to 195 (IVLT…VLIL). Residues 341–411 (AANRGGPPPE…APARTGDQNA (71 aa)) form a disordered region. The segment covering 370-404 (DACADNAFPDDAPPGAAAPNAGSPDGPAPDGGAPA) has biased composition (low complexity).

The protein belongs to the type III secretion exporter family.

It is found in the cell membrane. Part of the bsa type III secretion system, is involved in the intracellular replication of invading bacteria inside the host cell. Probably necessary for the lysis of the vacuole membrane and escape into the host cell cytoplasm. This is Secretion apparatus protein BsaZ (bsaZ) from Burkholderia pseudomallei (strain 1710b).